Here is a 276-residue protein sequence, read N- to C-terminus: Large ribosomal subunit protein uL2 (276 aa).

Positions 208–276 (KAGRNRHRGI…KLIISRRKGK (69 aa)) are disordered. Residues 230–240 (DHPHGGGEGKK) show a composition bias toward basic and acidic residues. Positions 255–276 (KGAKTRRKKASDKLIISRRKGK) are enriched in basic residues.

The protein belongs to the universal ribosomal protein uL2 family. As to quaternary structure, part of the 50S ribosomal subunit. Forms a bridge to the 30S subunit in the 70S ribosome.

One of the primary rRNA binding proteins. Required for association of the 30S and 50S subunits to form the 70S ribosome, for tRNA binding and peptide bond formation. It has been suggested to have peptidyltransferase activity; this is somewhat controversial. Makes several contacts with the 16S rRNA in the 70S ribosome. The protein is Large ribosomal subunit protein uL2 of Campylobacter lari (strain RM2100 / D67 / ATCC BAA-1060).